The primary structure comprises 86 residues: Small ribosomal subunit protein bS20 (86 aa).

This sequence belongs to the bacterial ribosomal protein bS20 family.

In terms of biological role, binds directly to 16S ribosomal RNA. This is Small ribosomal subunit protein bS20 from Rhodococcus opacus (strain B4).